The chain runs to 806 residues: Leucine--tRNA ligase (806 aa).

The 'HIGH' region motif lies at 38-48 (PYPSGEIHMGH). The short motif at 572–576 (KMSKS) is the 'KMSKS' region element. Residue K575 participates in ATP binding.

The protein belongs to the class-I aminoacyl-tRNA synthetase family.

It is found in the cytoplasm. The catalysed reaction is tRNA(Leu) + L-leucine + ATP = L-leucyl-tRNA(Leu) + AMP + diphosphate. This Helicobacter acinonychis (strain Sheeba) protein is Leucine--tRNA ligase.